The sequence spans 953 residues: Zinc finger protein 507 (953 aa).

The residue at position 95 (Ser-95) is a Phosphoserine. 3 consecutive C2H2-type zinc fingers follow at residues 125-147 (YQCS…IKQH), 155-185 (LMCS…ANIH), and 248-270 (YRCL…AWKH). The residue at position 427 (Ser-427) is a Phosphoserine. The segment at 470-489 (KGLATDENAPPGRRRTNSES) is disordered. C2H2-type zinc fingers lie at residues 641 to 663 (YRCR…LRVH), 669 to 691 (YQCP…MIHH), 697 to 720 (YQCK…REQH), 758 to 780 (YRCD…RRIH), and 786 to 808 (YRCS…MWKH). The segment at 831-888 (GRVLGKSPGKTQLKSSEESADPVTGSSENAVSSSELMSQTPSEVLGTNENEKLSPTSN) is disordered. Polar residues predominate over residues 854-888 (TGSSENAVSSSELMSQTPSEVLGTNENEKLSPTSN). Residues 911–933 (FCCCICGFESTSKENLLDHMKEH) form a C2H2-type 9 zinc finger.

This sequence belongs to the krueppel C2H2-type zinc-finger protein family.

It localises to the nucleus. In terms of biological role, may be involved in transcriptional regulation. The protein is Zinc finger protein 507 (ZNF507) of Homo sapiens (Human).